We begin with the raw amino-acid sequence, 564 residues long: Laccase-22 (564 aa).

The first 25 residues, 1 to 25 (MAVLPESRRLSLLLMAACFLLQALS), serve as a signal peptide directing secretion. Plastocyanin-like domains are found at residues 36–152 (NVVM…PKLG) and 162–314 (KEAV…YANT). N-linked (GlcNAc...) asparagine glycans are attached at residues N41 and N82. Cu cation-binding residues include H86 and H88. A glycan (N-linked (GlcNAc...) asparagine) is linked at N118. Residues H131 and H133 each coordinate Cu cation. N191, N302, N331, N379, N389, N424, N437, and N447 each carry an N-linked (GlcNAc...) asparagine glycan. One can recognise a Plastocyanin-like 3 domain in the interval 414–548 (DFPATPLHKF…KMAFVVDNGK (135 aa)). H465, H468, H470, H527, C528, H529, and H533 together coordinate Cu cation.

It belongs to the multicopper oxidase family. Cu cation serves as cofactor.

The protein resides in the secreted. It localises to the extracellular space. The protein localises to the apoplast. It catalyses the reaction 4 hydroquinone + O2 = 4 benzosemiquinone + 2 H2O. In terms of biological role, lignin degradation and detoxification of lignin-derived products. The protein is Laccase-22 (LAC22) of Oryza sativa subsp. japonica (Rice).